A 282-amino-acid polypeptide reads, in one-letter code: Para-Rep C2 (282 aa).

In terms of domain architecture, CRESS-DNA virus Rep endonuclease spans 1-99 (MASKRWCFTL…ETLIAEIGAP (99 aa)). The short motif at 7–10 (CFTL) is the RCR-1 element. A divalent metal cation contacts are provided by E38 and H47. The short motif at 47 to 49 (HLQ) is the RCR-2 element. The Nuclear localization signal signature appears at 56 to 77 (KLIRLGGLKKKFGSIAHWEIAK). Y86 (for DNA cleavage activity) is an active-site residue. The RCR-3 motif lies at 86–89 (YCTK). Residues 99-105 (PVKKGSN) carry the Nuclear localization signal motif. 174–182 (GPDGGEGKS) provides a ligand contact to ATP.

The protein belongs to the nanoviridea/circoviridae replication-associated protein family. In terms of assembly, homooligomer (Potential). Rep binds to repeated DNA motifs (iterons). Mg(2+) is required as a cofactor. Requires Mn(2+) as cofactor.

The protein resides in the host nucleus. It catalyses the reaction ATP + H2O = ADP + phosphate + H(+). In terms of biological role, initiates and terminates the replication only of its own subviral DNA molecule. The closed circular ssDNA genome is first converted to a superhelical dsDNA. Rep binds a specific hairpin at the genome origin of replication. Introduces an endonucleolytic nick within the intergenic region of the genome, thereby initiating the rolling circle replication (RCR). Following cleavage, binds covalently to the 5'-phosphate of DNA as a tyrosyl ester. The cleavage gives rise to a free 3'-OH that serves as a primer for the cellular DNA polymerase. The polymerase synthesizes the (+) strand DNA by rolling circle mechanism. After one round of replication, a Rep-catalyzed nucleotidyl transfer reaction releases a circular single-stranded virus genome, thereby terminating the replication. Displays origin-specific DNA cleavage, nucleotidyl transferase, ATPase and helicase activities. In Milk vetch dwarf C2 alphasatellite (MVDC2A), this protein is Para-Rep C2 (C2).